The chain runs to 135 residues: C-type lectin APL (135 aa).

Disulfide bonds link cysteine 3–cysteine 14, cysteine 31–cysteine 131, cysteine 38–cysteine 133, and cysteine 106–cysteine 123. The C-type lectin domain occupies 10–132 (MNGLCYKIFD…CESKNAFLCQ (123 aa)). Ca(2+) is bound by residues glutamine 96, aspartate 98, glutamate 104, asparagine 119, and aspartate 120. The short motif at 96-98 (QPD) is the Galactose-binding element.

It belongs to the true venom lectin family. Homodimer; disulfide-linked. As to expression, expressed by the venom gland.

It localises to the secreted. Functionally, beta-galactoside lectin that agglutinates rabbit and human erythrocytes in a calcium-dependent fashion (MHC is 0.21 ug/ml on rabbit erythrocytes). Galactose (15 mM), lactose (20 mM), rhamnose (20 mM) and EGTA strongly inhibit this activity. This Agkistrodon piscivorus piscivorus (Eastern cottonmouth) protein is C-type lectin APL.